The following is a 645-amino-acid chain: Threonine--tRNA ligase (645 aa).

Positions 1 to 63 (MEQINIQFPD…ETDGSIEIVT (63 aa)) constitute a TGS domain. Positions 242-540 (DHRKIGKELE…LTEETKGAFP (299 aa)) are catalytic. Positions 336, 387, and 517 each coordinate Zn(2+).

It belongs to the class-II aminoacyl-tRNA synthetase family. Homodimer. The cofactor is Zn(2+).

It localises to the cytoplasm. The enzyme catalyses tRNA(Thr) + L-threonine + ATP = L-threonyl-tRNA(Thr) + AMP + diphosphate + H(+). Functionally, catalyzes the attachment of threonine to tRNA(Thr) in a two-step reaction: L-threonine is first activated by ATP to form Thr-AMP and then transferred to the acceptor end of tRNA(Thr). Also edits incorrectly charged L-seryl-tRNA(Thr). The protein is Threonine--tRNA ligase of Staphylococcus aureus (strain bovine RF122 / ET3-1).